A 159-amino-acid chain; its full sequence is Immunoglobulin J chain (159 aa).

A signal peptide spans 1–22 (MKNHLLFWGVLAVFIKAVHVKA). Residue Gln-23 is modified to Pyrrolidone carboxylic acid. Intrachain disulfides connect Cys-35–Cys-123, Cys-94–Cys-114, and Cys-131–Cys-156. N-linked (GlcNAc...) (complex) asparagine glycosylation occurs at Asn-71.

Part of the secretory IgA (sIgA) complex that consists of two, four or five IgA monomers, and two additional non-Ig polypeptides, namely the JCHAIN and the secretory component (the proteolytic product of PIGR). Part of the secretory IgM (sIgM) complex that consists of five IgM monomers, and two additional non-Ig polypeptides, namely the JCHAIN and the secretory component (the proteolytic product of PIGR). JCHAIN-containing IgM interacts (via CH4 domain) with FCRM (via Ig-like domain).

It localises to the secreted. Serves to link two monomer units of either IgM or IgA. In the case of IgM, the J chain-joined dimer is a nucleating unit for the IgM pentamer, and in the case of IgA it induces dimers and/or larger polymers. It also helps to bind these immunoglobulins to secretory component. The protein is Immunoglobulin J chain of Homo sapiens (Human).